The sequence spans 260 residues: Pectate lyase H (260 aa).

Positions 1–17 (MFIKNGLLLSLATSVLA) are cleaved as a signal peptide.

This sequence belongs to the polysaccharide lyase 3 family. Ca(2+) is required as a cofactor.

The protein resides in the secreted. It catalyses the reaction Eliminative cleavage of (1-&gt;4)-alpha-D-galacturonan to give oligosaccharides with 4-deoxy-alpha-D-galact-4-enuronosyl groups at their non-reducing ends.. Pectinolytic enzyme consist of four classes of enzymes: pectin lyase, polygalacturonase, pectin methylesterase and rhamnogalacturonase. Among pectinolytic enzymes, pectin lyase is the most important in depolymerization of pectin, since it cleaves internal glycosidic bonds of highly methylated pectins. Favors pectate, the anion, over pectin, the methyl ester. The polypeptide is Pectate lyase H (plyH) (Emericella nidulans (strain FGSC A4 / ATCC 38163 / CBS 112.46 / NRRL 194 / M139) (Aspergillus nidulans)).